Reading from the N-terminus, the 73-residue chain is Structural DNA-binding protein p10 (73 aa).

Residues 1–35 form a disordered region; the sequence is MPTKAGTKSTAHKKTTTKGPSKSPKGKTHATALHQ.

The protein belongs to the asfivirus P10 family.

It is found in the virion. Functionally, may play a role in genome packaging through direct interaction with viral DNA. Binds to ssDNA and dsDNA with the same apparent affinity in vitro. The polypeptide is Structural DNA-binding protein p10 (African swine fever virus (isolate Tick/Malawi/Lil 20-1/1983) (ASFV)).